Reading from the N-terminus, the 689-residue chain is DNA ligase (689 aa).

NAD(+) is bound by residues 40-44 (DSEYD), 89-90 (SL), and E121. The N6-AMP-lysine intermediate role is filled by K123. NAD(+)-binding residues include R144, E179, K295, and K319. 4 residues coordinate Zn(2+): C413, C416, C431, and C437. Positions 610–689 (REQSSLTDKI…EEWLTLIKNV (80 aa)) constitute a BRCT domain.

Belongs to the NAD-dependent DNA ligase family. LigA subfamily. The cofactor is Mg(2+). Mn(2+) is required as a cofactor.

It catalyses the reaction NAD(+) + (deoxyribonucleotide)n-3'-hydroxyl + 5'-phospho-(deoxyribonucleotide)m = (deoxyribonucleotide)n+m + AMP + beta-nicotinamide D-nucleotide.. Functionally, DNA ligase that catalyzes the formation of phosphodiester linkages between 5'-phosphoryl and 3'-hydroxyl groups in double-stranded DNA using NAD as a coenzyme and as the energy source for the reaction. It is essential for DNA replication and repair of damaged DNA. The sequence is that of DNA ligase from Rickettsia africae (strain ESF-5).